Reading from the N-terminus, the 207-residue chain is Ribosomal RNA large subunit methyltransferase E (207 aa).

S-adenosyl-L-methionine contacts are provided by Gly60, Trp62, Asp80, Asp96, and Asp121. Catalysis depends on Lys161, which acts as the Proton acceptor.

It belongs to the class I-like SAM-binding methyltransferase superfamily. RNA methyltransferase RlmE family.

The protein localises to the cytoplasm. The enzyme catalyses uridine(2552) in 23S rRNA + S-adenosyl-L-methionine = 2'-O-methyluridine(2552) in 23S rRNA + S-adenosyl-L-homocysteine + H(+). Its function is as follows. Specifically methylates the uridine in position 2552 of 23S rRNA at the 2'-O position of the ribose in the fully assembled 50S ribosomal subunit. This chain is Ribosomal RNA large subunit methyltransferase E, found in Pseudomonas paraeruginosa (strain DSM 24068 / PA7) (Pseudomonas aeruginosa (strain PA7)).